The following is a 393-amino-acid chain: Pyrimidine monooxygenase RutA (393 aa).

FMN is bound by residues 79-80, N145, E154, 170-171, and S220; these read IK and RY.

It belongs to the NtaA/SnaA/DszA monooxygenase family. RutA subfamily.

It catalyses the reaction uracil + FMNH2 + NADH + O2 = (Z)-3-ureidoacrylate + FMN + NAD(+) + H2O + H(+). The catalysed reaction is thymine + FMNH2 + NADH + O2 = (Z)-2-methylureidoacrylate + FMN + NAD(+) + H2O + H(+). In terms of biological role, catalyzes the pyrimidine ring opening between N-3 and C-4 by an unusual flavin hydroperoxide-catalyzed mechanism, adding oxygen atoms in the process to yield ureidoacrylate peracid, that immediately reacts with FMN forming ureidoacrylate and FMN-N(5)-oxide. The FMN-N(5)-oxide reacts spontaneously with NADH to produce FMN. Requires the flavin reductase RutF to regenerate FMN in vivo. In Escherichia coli O139:H28 (strain E24377A / ETEC), this protein is Pyrimidine monooxygenase RutA.